The chain runs to 389 residues: Sulfate adenylyltransferase (389 aa).

The protein belongs to the sulfate adenylyltransferase family.

The enzyme catalyses sulfate + ATP + H(+) = adenosine 5'-phosphosulfate + diphosphate. The protein operates within sulfur metabolism; hydrogen sulfide biosynthesis; sulfite from sulfate: step 1/3. The polypeptide is Sulfate adenylyltransferase (Deinococcus deserti (strain DSM 17065 / CIP 109153 / LMG 22923 / VCD115)).